The primary structure comprises 2635 residues: Large tegument protein deneddylase (2635 aa).

The interval 1 to 233 (MAAQPLYMEG…LHGPRMDISR (233 aa)) is deubiquitination activity. A Peptidase C76 domain is found at 9 to 223 (EGMASTHQAN…NHYRTIVFEE (215 aa)). Residues Cys29, Asp159, and His161 contribute to the active site. 4 disordered regions span residues 243–497 (ITSP…DRYA), 2238–2269 (PLTITPNKPTGTPHVSPEADPITERKRGQQPK), 2357–2438 (RTAL…KRAA), and 2500–2533 (KAGWDTAPDIPLPHSSPESSPPTSPQPIRVDDKS). Residues 245-255 (SPSVSPAPSEA) are compositionally biased toward low complexity. 2 stretches are compositionally biased toward basic and acidic residues: residues 256–270 (PLRRDSTQSQDETRP) and 282–295 (PTDRPRPPHQDRPP). The segment at 316–325 (KTGRGGNEGR) is interaction with inner tegument protein. The span at 330–346 (PPDEHQPPHITAEHMDQ) shows a compositional bias: basic and acidic residues. Residues 448-461 (DDPLTPLYPLTDTP) show a composition bias toward low complexity. A compositionally biased stretch (low complexity) spans 2379-2402 (TLTFRLPPTAPTPATAALETKTTP). Positions 2425 to 2437 (HARDTSPPAEKRA) are enriched in basic and acidic residues.

It belongs to the herpesviridae large tegument protein family. Interacts with host CUL1 and CUL4A; these interactions inhibit the E3 ligase activity of cullins. Interacts with inner tegument protein. Interacts with capsid vertex specific component CVC2. Interacts with the major capsid protein/MCP.

The protein resides in the virion tegument. It is found in the host cytoplasm. Its subcellular location is the host nucleus. It carries out the reaction Thiol-dependent hydrolysis of ester, thioester, amide, peptide and isopeptide bonds formed by the C-terminal Gly of ubiquitin (a 76-residue protein attached to proteins as an intracellular targeting signal).. In terms of biological role, large tegument protein that plays multiple roles in the viral cycle. During viral entry, remains associated with the capsid while most of the tegument is detached and participates in the capsid transport toward the host nucleus. Plays a role in the routing of the capsid at the nuclear pore complex and subsequent uncoating. Within the host nucleus, acts as a deneddylase and promotes the degradation of nuclear CRLs (cullin-RING ubiquitin ligases) and thereby stabilizes nuclear CRL substrates, while cytoplasmic CRLs remain unaffected. These modifications prevent host cell cycle S-phase progression and create a favorable environment allowing efficient viral genome replication. Participates later in the secondary envelopment of capsids. Indeed, plays a linker role for the association of the outer viral tegument to the capsids together with the inner tegument protein. The sequence is that of Large tegument protein deneddylase from Homo sapiens (Human).